A 625-amino-acid polypeptide reads, in one-letter code: ATP-dependent rRNA helicase spb4 (625 aa).

Residues 14-42 (WDALTPSLAEWILDAIKSMGFEKMTPVQA) carry the Q motif motif. Residues 45 to 246 (IPLFMGNKDV…RVGLRNPVKI (202 aa)) form the Helicase ATP-binding domain. Residue 58-65 (AVTGSGKT) coordinates ATP. Positions 194 to 197 (DEAD) match the DEAD box motif. The region spanning 278–436 (ALLSLLSQLQ…TTDDAAKILI (159 aa)) is the Helicase C-terminal domain. The disordered stretch occupies residues 550–597 (KKQREAWSQKHEKQDLKELKREKKKRKREIERLDKMTDEEKRVEQEKE). 2 stretches are compositionally biased toward basic and acidic residues: residues 553–570 (REAWSQKHEKQDLKELKR) and 577–597 (REIERLDKMTDEEKRVEQEKE). The stretch at 557 to 614 (SQKHEKQDLKELKREKKKRKREIERLDKMTDEEKRVEQEKERELQALIEQVKRRKIED) forms a coiled coil.

The protein belongs to the DEAD box helicase family. DDX55/SPB4 subfamily. Component of pre-60S ribosomal complexes.

The protein localises to the nucleus. Its subcellular location is the nucleolus. The catalysed reaction is ATP + H2O = ADP + phosphate + H(+). In terms of biological role, ATP-binding RNA helicase involved in the biogenesis of 60S ribosomal subunits. Binds 90S pre-ribosomal particles and dissociates from pre-60S ribosomal particles after processing of 27SB pre-rRNA. Required for the normal formation of 18S rRNA through the processing of pre-rRNAs at sites A0, A1 and A2, and the normal formation of 25S and 5.8S rRNAs through the processing of pre-rRNAs at sites C1 and C2. This chain is ATP-dependent rRNA helicase spb4, found in Sclerotinia sclerotiorum (strain ATCC 18683 / 1980 / Ss-1) (White mold).